Consider the following 342-residue polypeptide: DNA primase small subunit PriS (342 aa).

Catalysis depends on residues Asp-97, Asp-99, and Asp-236.

This sequence belongs to the eukaryotic-type primase small subunit family. As to quaternary structure, heterodimer of a small subunit (PriS) and a large subunit (PriL). It depends on Mg(2+) as a cofactor. Mn(2+) is required as a cofactor.

Functionally, catalytic subunit of DNA primase, an RNA polymerase that catalyzes the synthesis of short RNA molecules used as primers for DNA polymerase during DNA replication. The small subunit contains the primase catalytic core and has DNA synthesis activity on its own. Binding to the large subunit stabilizes and modulates the activity, increasing the rate of DNA synthesis while decreasing the length of the DNA fragments, and conferring RNA synthesis capability. The DNA polymerase activity may enable DNA primase to also catalyze primer extension after primer synthesis. May also play a role in DNA repair. This is DNA primase small subunit PriS from Aeropyrum pernix (strain ATCC 700893 / DSM 11879 / JCM 9820 / NBRC 100138 / K1).